The sequence spans 294 residues: ATP synthase gamma chain (294 aa).

Belongs to the ATPase gamma chain family. As to quaternary structure, F-type ATPases have 2 components, CF(1) - the catalytic core - and CF(0) - the membrane proton channel. CF(1) has five subunits: alpha(3), beta(3), gamma(1), delta(1), epsilon(1). CF(0) has three main subunits: a, b and c.

It is found in the cell inner membrane. Produces ATP from ADP in the presence of a proton gradient across the membrane. The gamma chain is believed to be important in regulating ATPase activity and the flow of protons through the CF(0) complex. The polypeptide is ATP synthase gamma chain (Mesorhizobium japonicum (strain LMG 29417 / CECT 9101 / MAFF 303099) (Mesorhizobium loti (strain MAFF 303099))).